The following is a 535-amino-acid chain: GMP synthase [glutamine-hydrolyzing] (535 aa).

The region spanning 24–217 (KILIVDFGSQ…VRKVAGLKGD (194 aa)) is the Glutamine amidotransferase type-1 domain. The active-site Nucleophile is cysteine 101. Residues histidine 191 and glutamate 193 contribute to the active site. Residues 218–410 (WTMRAFREEA…LGLPEVFVGR (193 aa)) form the GMPS ATP-PPase domain. 245 to 251 (SGGVDSA) contributes to the ATP binding site.

In terms of assembly, homodimer.

It catalyses the reaction XMP + L-glutamine + ATP + H2O = GMP + L-glutamate + AMP + diphosphate + 2 H(+). It functions in the pathway purine metabolism; GMP biosynthesis; GMP from XMP (L-Gln route): step 1/1. In terms of biological role, catalyzes the synthesis of GMP from XMP. This is GMP synthase [glutamine-hydrolyzing] from Rhodopseudomonas palustris (strain BisB18).